Here is a 277-residue protein sequence, read N- to C-terminus: Phosphatidylglycerol--prolipoprotein diacylglyceryl transferase (277 aa).

4 helical membrane-spanning segments follow: residues 18-38 (ISVK…LLLA), 51-71 (IIVD…RIYY), 89-109 (IWHG…TAII), and 116-136 (ISFW…QAIG). An a 1,2-diacyl-sn-glycero-3-phospho-(1'-sn-glycerol)-binding site is contributed by R137. 3 consecutive transmembrane segments (helical) span residues 177–197 (QPTF…LLII), 205–225 (GELF…IEGM), and 235–255 (FRVS…IIIY).

This sequence belongs to the Lgt family.

Its subcellular location is the cell membrane. It carries out the reaction L-cysteinyl-[prolipoprotein] + a 1,2-diacyl-sn-glycero-3-phospho-(1'-sn-glycerol) = an S-1,2-diacyl-sn-glyceryl-L-cysteinyl-[prolipoprotein] + sn-glycerol 1-phosphate + H(+). Its pathway is protein modification; lipoprotein biosynthesis (diacylglyceryl transfer). Catalyzes the transfer of the diacylglyceryl group from phosphatidylglycerol to the sulfhydryl group of the N-terminal cysteine of a prolipoprotein, the first step in the formation of mature lipoproteins. This is Phosphatidylglycerol--prolipoprotein diacylglyceryl transferase from Listeria monocytogenes serotype 4a (strain HCC23).